Here is a 492-residue protein sequence, read N- to C-terminus: MO25-like protein 3 (492 aa).

Residues 442–492 (SRAGIRFGETRNVKGSPRSRSQSPRPPTGPEPSPRTTSYQNVRFPPEDSSR) form a disordered region. A compositionally biased stretch (pro residues) spans 465–474 (PRPPTGPEPS).

It belongs to the Mo25 family.

In Caenorhabditis briggsae, this protein is MO25-like protein 3.